The chain runs to 23 residues: Potassium channel toxin alpha-KTx 13.4 (23 aa).

3 cysteine pairs are disulfide-bonded: cysteine 2–cysteine 15, cysteine 5–cysteine 20, and cysteine 9–cysteine 22. Positions 13–20 (GKCINGKC) are interaction with Ca(2+)-activated K(+) channels. Tyrosine 23 carries the tyrosine amide modification.

Expressed by the venom gland.

The protein resides in the secreted. Its function is as follows. Blocks the potassium channel Shaker B. This is Potassium channel toxin alpha-KTx 13.4 from Tityus stigmurus (Brazilian scorpion).